Reading from the N-terminus, the 410-residue chain is Peptidase T (410 aa).

Position 79 (H79) interacts with Zn(2+). D81 is an active-site residue. Zn(2+) is bound at residue D142. E176 functions as the Proton acceptor in the catalytic mechanism. Residues E177, D199, and H381 each coordinate Zn(2+).

Belongs to the peptidase M20B family. Requires Zn(2+) as cofactor.

The protein resides in the cytoplasm. It catalyses the reaction Release of the N-terminal residue from a tripeptide.. Its function is as follows. Cleaves the N-terminal amino acid of tripeptides. This is Peptidase T (pepT) from Bacillus subtilis (strain 168).